The sequence spans 459 residues: tRNA modification GTPase MnmE (459 aa).

Residues R23, E88, and R127 each contribute to the (6S)-5-formyl-5,6,7,8-tetrahydrofolate site. One can recognise a TrmE-type G domain in the interval 223–381 (GLNTVIVGKP…FKEVIKELFF (159 aa)). N233 is a K(+) binding site. GTP contacts are provided by residues 233–238 (NVGKSS), 252–258 (TDVPGTT), and 277–280 (DTAG). S237 lines the Mg(2+) pocket. The K(+) site is built by T252, V254, and T257. A Mg(2+)-binding site is contributed by T258. K459 provides a ligand contact to (6S)-5-formyl-5,6,7,8-tetrahydrofolate.

This sequence belongs to the TRAFAC class TrmE-Era-EngA-EngB-Septin-like GTPase superfamily. TrmE GTPase family. In terms of assembly, homodimer. Heterotetramer of two MnmE and two MnmG subunits. K(+) is required as a cofactor.

It is found in the cytoplasm. Functionally, exhibits a very high intrinsic GTPase hydrolysis rate. Involved in the addition of a carboxymethylaminomethyl (cmnm) group at the wobble position (U34) of certain tRNAs, forming tRNA-cmnm(5)s(2)U34. The sequence is that of tRNA modification GTPase MnmE from Clostridium novyi (strain NT).